The chain runs to 491 residues: Cytochrome P450 2F2 (491 aa).

C436 contributes to the heme binding site.

It belongs to the cytochrome P450 family. It depends on heme as a cofactor.

It localises to the endoplasmic reticulum membrane. It is found in the microsome membrane. In terms of biological role, involved in the regio- and stereoselective transformation of naphthalene to trans-1R-hydroxy-2R-glutathionyl-1,2-dihydronaphthalene in the presence of glutathione and glutathione S-transferases. It specifically catalyzes the production of a very reactive and potentially toxic intermediate, the 2R,2S arene oxide, that is associated with necrosis of the unciliated bronchiolar epithelial cells or club cells in lung. The sequence is that of Cytochrome P450 2F2 (Cyp2f2) from Rattus norvegicus (Rat).